Consider the following 805-residue polypeptide: Angiotensin-converting enzyme 2 (805 aa).

The N-terminal stretch at 1–17 (MSGSFWLLLSFAALTAA) is a signal peptide. Residues 18–740 (QSTTEELAKT…LSPPYRPPVT (723 aa)) lie on the Extracellular side of the membrane. The Peptidase M2 domain occupies 19-607 (STTEELAKTF…QNRNSFVGWD (589 aa)). Residues 30-41 (ETFNYEAQELSY) are interaction with SARS S protein. Asn53 carries an N-linked (GlcNAc...) asparagine glycan. 2 interaction with SARS S protein regions span residues 82–84 (TYP) and 90–93 (DAKI). Residues Cys133 and Cys141 are joined by a disulfide bond. Residue Arg169 coordinates chloride. Residue Asn216 is glycosylated (N-linked (GlcNAc...) asparagine). Arg273 provides a ligand contact to substrate. Asn322 carries N-linked (GlcNAc...) asparagine glycosylation. A disulfide bridge links Cys344 with Cys361. Residue 345 to 346 (HP) participates in substrate binding. Residues 353 to 357 (KGDFR) are interaction with SARS S protein. Residue His374 coordinates Zn(2+). The Proton acceptor role is filled by Glu375. His378 and Glu402 together coordinate Zn(2+). Chloride contacts are provided by Trp477 and Lys481. His505 functions as the Proton donor in the catalytic mechanism. Tyr515 is a substrate binding site. Residues Cys530 and Cys542 are joined by a disulfide bond. Asn546 carries an N-linked (GlcNAc...) asparagine glycan. The region spanning 614 to 805 (SDQSIKVRIS…QHADDVQTSF (192 aa)) is the Collectrin-like domain. Residues 652 to 659 (REYFSKVK) are essential for cleavage by ADAM17. N-linked (GlcNAc...) asparagine glycosylation is found at Asn660 and Asn690. Residues 697 to 716 (RSEVEDAIRMSRSRINDAFR) form an essential for cleavage by TMPRSS11D and TMPRSS2 region. The chain crosses the membrane as a helical span at residues 741–761 (IWLIVFGVVMGAIVVGIVLLI). Over 762–805 (VSGIRNRRKNDQAGSEENPYASVDLNKGENNPGFQHADDVQTSF) the chain is Cytoplasmic. The disordered stretch occupies residues 771–805 (NDQAGSEENPYASVDLNKGENNPGFQHADDVQTSF). Residues 778–786 (ENPYASVDL) carry the LIR motif. Phosphotyrosine is present on Tyr781. The Endocytic sorting signal motif lies at 781–784 (YASV). An SH2-binding motif is present at residues 781 to 785 (YASVD). Ser783 bears the Phosphoserine mark. A PTB motif is present at residues 792-795 (NPGF). Positions 803 to 805 (TSF) match the PDZ-binding motif.

This sequence belongs to the peptidase M2 family. In terms of assembly, homodimer. Interacts with the catalytically active form of TMPRSS2. Interacts with SLC6A19; this interaction is essential for expression and function of SLC6A19 in intestine. Interacts with ITGA5:ITGB1. Probably interacts (via endocytic sorting signal motif) with AP2M1; the interaction is inhibited by phosphorylation of Tyr-781. Interacts (via PDZ-binding motif) with NHERF1 (via PDZ domains); the interaction may enhance ACE2 membrane residence. As to quaternary structure, (Microbial infection) Interacts with SARS-CoV S protein. The cofactor is Zn(2+). It depends on chloride as a cofactor. Proteolytic cleavage by ADAM17 generates a secreted form. Also cleaved by serine proteases: TMPRSS2, TMPRSS11D and HPN/TMPRSS1. In terms of processing, phosphorylated. Phosphorylation at Tyr-781 probably inhibits interaction with AP2M1 and enables interactions with proteins containing SH2 domains.

It is found in the secreted. The protein resides in the cell membrane. The protein localises to the cytoplasm. It localises to the cell projection. Its subcellular location is the cilium. It is found in the apical cell membrane. The enzyme catalyses angiotensin II + H2O = angiotensin-(1-7) + L-phenylalanine. It catalyses the reaction angiotensin I + H2O = angiotensin-(1-9) + L-leucine. Functionally, essential counter-regulatory carboxypeptidase of the renin-angiotensin hormone system that is a critical regulator of blood volume, systemic vascular resistance, and thus cardiovascular homeostasis. Converts angiotensin I to angiotensin 1-9, a nine-amino acid peptide with anti-hypertrophic effects in cardiomyocytes, and angiotensin II to angiotensin 1-7, which then acts as a beneficial vasodilator and anti-proliferation agent, counterbalancing the actions of the vasoconstrictor angiotensin II. Also removes the C-terminal residue from three other vasoactive peptides, neurotensin, kinetensin, and des-Arg bradykinin, but is not active on bradykinin. Also cleaves other biological peptides, such as apelins, casomorphins and dynorphin A. Plays an important role in amino acid transport by acting as binding partner of amino acid transporter SLC6A19 in intestine, regulating trafficking, expression on the cell surface, and its catalytic activity. In terms of biological role, (Microbial infection) Acts as a receptor for human coronavirus SARS. The chain is Angiotensin-converting enzyme 2 (ACE2) from Paguma larvata (Masked palm civet).